The chain runs to 480 residues: MPLRVYNTLTGSKEEFVPINPGKVGMYVCGVTVYDHCHIGHARANVVFDMIYRHLLSKGLEVTYVRNYTDIDDKIINRANRDGVAYNEISERFIKEFDNDMARLMLQLPTFQPKATEHIPEIINLVQKLIDKGFAYQSGSDVFYRVDRFEGYLKLSKRNLEDMQAGARIDVDERKEHPMDFALWKGAKPGEPYWESPWGQGRPGWHIECSAMSTKFLGETLDIHGGGKDLIFPHHENEIAQSEAASGKPFVKYWLHNGFVNINSEKMSKSLGNFFTIKEILESYDAEVLRFFLLSAHYRSPIDFSDQNLKEAELGLERIYKALAGIDERLASGAHTPADADNTEFAEKVAGFAGRFGDAMDDDFNTALALGHLFDLVRVINRELPTASTGLLEKVKAEVAKMAAVLGICDSVPAAFLQRMKDRKTSDMEMSAEEIETLIAERAEARKAKNFKRGDEIRDLLLEKNIVLLDSAQGTTWKVK.

Cysteine 29 serves as a coordination point for Zn(2+). Positions valine 31–histidine 41 match the 'HIGH' region motif. Zn(2+) contacts are provided by cysteine 209, histidine 234, and glutamate 238. The 'KMSKS' region signature appears at lysine 266–serine 270. Lysine 269 contributes to the ATP binding site.

This sequence belongs to the class-I aminoacyl-tRNA synthetase family. Monomer. It depends on Zn(2+) as a cofactor.

It localises to the cytoplasm. It catalyses the reaction tRNA(Cys) + L-cysteine + ATP = L-cysteinyl-tRNA(Cys) + AMP + diphosphate. In Geobacter sp. (strain M21), this protein is Cysteine--tRNA ligase.